A 249-amino-acid polypeptide reads, in one-letter code: T-cell immunoreceptor with Ig and ITIM domains (249 aa).

Residues 1–28 (MHGWLLLVWVQGLIQAAFLATAIGATAG) form the signal peptide. The 99-residue stretch at 29 to 127 (TIDTKRNISA…GGIYKGRIFL (99 aa)) folds into the Ig-like V-type domain. At 29-148 (TIDTKRNISA…LAQFQTAPLG (120 aa)) the chain is on the extracellular side. The tract at residues 35 to 45 (NISAEEGGSVI) is homodimerization. The cysteines at positions 48 and 111 are disulfide-linked. N-linked (GlcNAc...) asparagine glycosylation occurs at N104. Residues 149–169 (GTMAAVLGLICLMVTGVTVLA) form a helical membrane-spanning segment. At 170–249 (RKDKSIRMHS…ESFIAVSKTG (80 aa)) the chain is on the cytoplasmic side. The interval 182–222 (SGLGRTEAEPQEWNLRSLSSPGSPVQTQTAPAGPCGEQAED) is disordered. The span at 195-211 (NLRSLSSPGSPVQTQTA) shows a compositional bias: polar residues. Positions 234 to 239 (LSYRSL) match the ITIM motif motif.

As to quaternary structure, homodimer in cis; binds with high affinity to PVR, forming a heterotetrameric assembly of two TIGIT and two PVR molecules. Binds with lower affinity to NECTIN2 and NECTIN3. Interacts with GRB2. Interacts with NECTIN4.

It localises to the cell membrane. Functionally, inhibitory receptor that plays a role in the modulation of immune responses. Suppresses T-cell activation by promoting the generation of mature immunoregulatory dendritic cells. Upon binding to its ligands PVR/CD155 or NECTIN2/CD112, which are expressed on antigen-presenting cells, sends inhibitory signals to the T-cell or NK cell. Mechanistically, interaction with ligand leads to phosphorylation of the cytoplasmic tail by Src family tyrosine kinases such as FYN or LCK, allowing subsequent binding to adapter GRB2 and SHIP1/INPP5D. In turn, inhibits PI3K and MAPK signaling cascades. In addition, associates with beta-arrestin-2/ARRB2 to recruit SHIP1/INPP5D that suppresses autoubiquitination of TRAF6 and subsequently inhibits NF-kappa-B signaling pathway. Also acts as a receptor for NECTIN4 to inhibit NK cell cytotoxicity. In Mus musculus (Mouse), this protein is T-cell immunoreceptor with Ig and ITIM domains.